The chain runs to 478 residues: Cytochrome c-552 (478 aa).

The first 26 residues, 1–26, serve as a signal peptide directing secretion; it reads MTRIKINARRIFSLLIPFFFFTSVHA. Residue H94 coordinates heme c. Residues C122, C125, and K126 each contribute to the heme site. Heme c contacts are provided by C160, C163, H164, C209, C212, and H213. Ca(2+)-binding residues include E215, Y216, K261, and Q263. Y216 is a binding site for substrate. H264 serves as a coordination point for substrate. The heme c site is built by H275, C282, C285, H286, H301, C314, C317, H318, and H393.

It belongs to the cytochrome c-552 family. Requires Ca(2+) as cofactor. Heme c is required as a cofactor.

It localises to the periplasm. It carries out the reaction 6 Fe(III)-[cytochrome c] + NH4(+) + 2 H2O = 6 Fe(II)-[cytochrome c] + nitrite + 8 H(+). Its pathway is nitrogen metabolism; nitrate reduction (assimilation). In terms of biological role, catalyzes the reduction of nitrite to ammonia, consuming six electrons in the process. This Escherichia coli O157:H7 (strain EC4115 / EHEC) protein is Cytochrome c-552.